We begin with the raw amino-acid sequence, 146 residues long: Globin-1 (146 aa).

The Globin domain occupies 9–146; that stretch reads QLTADVKKDL…KLVAVVQAAL (138 aa). His101 lines the heme b pocket.

This sequence belongs to the globin family. Homodimer.

The protein localises to the cytoplasm. This is Globin-1 from Anadara broughtonii (Blood clam).